The sequence spans 181 residues: Ribonuclease HII (181 aa).

The 181-residue stretch at 1–181 folds into the RNase H type-2 domain; the sequence is MICGIDEVGR…SLHRKNFKLI (181 aa). Residues Asp6, Glu7, and Asp98 each contribute to the a divalent metal cation site.

The protein belongs to the RNase HII family. The cofactor is Mn(2+). Mg(2+) serves as cofactor.

The protein localises to the cytoplasm. It catalyses the reaction Endonucleolytic cleavage to 5'-phosphomonoester.. Its function is as follows. Endonuclease that specifically degrades the RNA of RNA-DNA hybrids. The sequence is that of Ribonuclease HII from Borreliella burgdorferi (strain ZS7) (Borrelia burgdorferi).